Here is a 154-residue protein sequence, read N- to C-terminus: Ribosomal RNA large subunit methyltransferase H (154 aa).

Residues leucine 70, glycine 102, and 121–126 (LSRMTL) each bind S-adenosyl-L-methionine.

It belongs to the RNA methyltransferase RlmH family. Homodimer.

The protein localises to the cytoplasm. It carries out the reaction pseudouridine(1915) in 23S rRNA + S-adenosyl-L-methionine = N(3)-methylpseudouridine(1915) in 23S rRNA + S-adenosyl-L-homocysteine + H(+). In terms of biological role, specifically methylates the pseudouridine at position 1915 (m3Psi1915) in 23S rRNA. This Citrifermentans bemidjiense (strain ATCC BAA-1014 / DSM 16622 / JCM 12645 / Bem) (Geobacter bemidjiensis) protein is Ribosomal RNA large subunit methyltransferase H.